Here is a 411-residue protein sequence, read N- to C-terminus: Glutamate dehydrogenase (411 aa).

Lys102 is a catalytic residue.

It belongs to the Glu/Leu/Phe/Val dehydrogenases family.

The enzyme catalyses L-glutamate + NAD(+) + H2O = 2-oxoglutarate + NH4(+) + NADH + H(+). It catalyses the reaction L-glutamate + NADP(+) + H2O = 2-oxoglutarate + NH4(+) + NADPH + H(+). The chain is Glutamate dehydrogenase (GDH) from Vitis vinifera (Grape).